The sequence spans 60 residues: Translational regulator CsrA (60 aa).

It belongs to the CsrA/RsmA family. Homodimer; the beta-strands of each monomer intercalate to form a hydrophobic core, while the alpha-helices form wings that extend away from the core.

The protein resides in the cytoplasm. In terms of biological role, a key translational regulator that binds mRNA to regulate translation initiation and/or mRNA stability. Mediates global changes in gene expression, shifting from rapid growth to stress survival by linking envelope stress, the stringent response and the catabolite repression systems. Usually binds in the 5'-UTR; binding at or near the Shine-Dalgarno sequence prevents ribosome-binding, repressing translation, binding elsewhere in the 5'-UTR can activate translation and/or stabilize the mRNA. Its function is antagonized by small RNA(s). In Histophilus somni (strain 2336) (Haemophilus somnus), this protein is Translational regulator CsrA.